Consider the following 235-residue polypeptide: MFGRNPARGPDPGDGESLWIQEVFYTLQGEGPFSGQPSVFVRTAGCNLRCAWCDTDFESSAWKPPLPELLAVIDSRRPRVCDLVVLTGGEPLRQEVGPLVRALLARGLRVQIETNGTLWRDLPFGPGLSIVCSPKTRTLDPQLVPRIDAFKYVIAAGETDPTDGLPALSTQHPGRAERLFRPPPGVPVFVMPRDDHGTPARPGRGEDDNLAEAAASALRFGYRLCVQVHKILKIA.

Substrate contacts are provided by residues 27 to 29 (LQG) and arginine 42. A Radical SAM core domain is found at 33–235 (FSGQPSVFVR…VQVHKILKIA (203 aa)). 3 residues coordinate [4Fe-4S] cluster: cysteine 46, cysteine 50, and cysteine 53. Threonine 55 lines the Mg(2+) pocket. Threonine 87 contacts substrate. Residues glycine 89 and 133–135 (SPK) each bind S-adenosyl-L-methionine.

It belongs to the radical SAM superfamily. 7-carboxy-7-deazaguanine synthase family. As to quaternary structure, homodimer. [4Fe-4S] cluster is required as a cofactor. Requires S-adenosyl-L-methionine as cofactor. The cofactor is Mg(2+).

The enzyme catalyses 6-carboxy-5,6,7,8-tetrahydropterin + H(+) = 7-carboxy-7-deazaguanine + NH4(+). The protein operates within purine metabolism; 7-cyano-7-deazaguanine biosynthesis. Functionally, catalyzes the complex heterocyclic radical-mediated conversion of 6-carboxy-5,6,7,8-tetrahydropterin (CPH4) to 7-carboxy-7-deazaguanine (CDG), a step common to the biosynthetic pathways of all 7-deazapurine-containing compounds. The polypeptide is 7-carboxy-7-deazaguanine synthase (Rhodospirillum rubrum (strain ATCC 11170 / ATH 1.1.1 / DSM 467 / LMG 4362 / NCIMB 8255 / S1)).